Consider the following 303-residue polypeptide: Coenzyme PQQ synthesis protein B (303 aa).

Belongs to the PqqB family.

The protein operates within cofactor biosynthesis; pyrroloquinoline quinone biosynthesis. In terms of biological role, may be involved in the transport of PQQ or its precursor to the periplasm. This is Coenzyme PQQ synthesis protein B from Pseudomonas syringae pv. syringae (strain B728a).